Reading from the N-terminus, the 112-residue chain is PTS system lactose-specific EIIA component (112 aa).

The region spanning 6 to 104 is the PTS EIIA type-3 domain; that stretch reads EEISMVGFAL…TRYMIRMFKR (99 aa). Residue H80 is the Tele-phosphohistidine intermediate of the active site. Position 80 is a phosphohistidine; by HPr (H80). Residue D83 coordinates Mg(2+).

In terms of assembly, homotrimer. It depends on Mg(2+) as a cofactor.

The protein resides in the cytoplasm. Its function is as follows. The phosphoenolpyruvate-dependent sugar phosphotransferase system (sugar PTS), a major carbohydrate active transport system, catalyzes the phosphorylation of incoming sugar substrates concomitantly with their translocation across the cell membrane. The enzyme II LacEF PTS system is involved in lactose transport. In Lacticaseibacillus casei (Lactobacillus casei), this protein is PTS system lactose-specific EIIA component.